We begin with the raw amino-acid sequence, 150 residues long: Anti-sigma F factor (150 aa).

Belongs to the anti-sigma-factor family.

The enzyme catalyses L-seryl-[protein] + ATP = O-phospho-L-seryl-[protein] + ADP + H(+). It catalyses the reaction L-threonyl-[protein] + ATP = O-phospho-L-threonyl-[protein] + ADP + H(+). Functionally, binds to sigma F and blocks its ability to form an RNA polymerase holoenzyme (E-sigma F). Phosphorylates SpoIIAA on a serine residue. This phosphorylation may enable SpoIIAA to act as an anti-anti-sigma factor that counteracts SpoIIAB and thus releases sigma F from inhibition. This Pasteuria penetrans protein is Anti-sigma F factor.